The sequence spans 199 residues: UPF0316 protein LA_0606 (199 aa).

The next 2 helical transmembrane spans lie at 47–67 (IAASLGFLEVLLWVVVITQVI) and 73–93 (VFCYLAYAGGFATGTFIGMIL).

The protein belongs to the UPF0316 family.

The protein resides in the cell membrane. The chain is UPF0316 protein LA_0606 from Leptospira interrogans serogroup Icterohaemorrhagiae serovar Lai (strain 56601).